A 406-amino-acid polypeptide reads, in one-letter code: Homocysteine-responsive endoplasmic reticulum-resident ubiquitin-like domain member 2 protein (406 aa).

Positions 10–89 (VTLIIKAPNQ…HMVHLVCTSR (80 aa)) constitute a Ubiquitin-like domain. Residues 86-154 (CTSRTPPSSP…TLPQAQTDQA (69 aa)) are disordered. Composition is skewed to low complexity over residues 87-98 (TSRTPPSSPKSS) and 106-126 (ALASSSNSSSDHSGSTTPSSG). The span at 127–154 (QETLSLAVGSSSEGLRQRTLPQAQTDQA) shows a compositional bias: polar residues. Residues 302–322 (FIMVMGAMLLVYLHQAGWFPF) traverse the membrane as a helical segment.

The protein resides in the membrane. Could be involved in the unfolded protein response (UPR) pathway. This Homo sapiens (Human) protein is Homocysteine-responsive endoplasmic reticulum-resident ubiquitin-like domain member 2 protein (HERPUD2).